A 566-amino-acid chain; its full sequence is Insulinoma-associated protein 2 (566 aa).

An SNAG domain region spans residues 1–20 (MPRGFLVKRTKRTGGLYRVR). The interval 32-117 (QGAPPFLEEA…PSPSPAKPAG (86 aa)) is disordered. Residues 103-113 (GPSPSPSPSPA) are compositionally biased toward pro residues. The C2H2-type 1; atypical zinc finger occupies 263 to 283 (FICQLCKEQYADPFALAQHRC). The C2H2-type 2 zinc finger occupies 291–313 (YRCPECDKVFSCPANLASHRRWH). Residues 310–418 (RRWHKPRPAA…RRVPVPGSTS (109 aa)) form a disordered region. Over residues 318–348 (AAANAATVSSADGKPPSSSSSSSRDSGAIAS) the composition is skewed to low complexity. Basic and acidic residues predominate over residues 352–369 (EGKENSRIERTADQHPQA). 3 consecutive C2H2-type zinc fingers follow at residues 426-448 (FVCPYCHKKFRRQAYLRKHLSTH), 470-492 (FACPLCGAHFPTADIREKHRLWH), and 525-548 (FSCKHCPSTFFSSPGLTRHINKCH).

As to expression, expressed in heart, liver, skeletal muscle, kidney and pancreas, and, to a lesser extent, in brain, lung and spleen. In the pancreas, expressed in islet cells, including insulin- and glucagon-producing alpha- and beta-cells, but not in acinar cells (at protein level). Detected in adrenal glands, particularly in the deeper layer of the cortex (at protein level).

It is found in the cytoplasm. It localises to the nucleus. In terms of biological role, may function as a growth suppressor or tumor suppressor in liver cells and in certain neurons. This chain is Insulinoma-associated protein 2 (INSM2), found in Homo sapiens (Human).